We begin with the raw amino-acid sequence, 430 residues long: Putative ABC transporter periplasmic-binding protein YcjN (430 aa).

Positions 1-19 (MIKSKIVLLSALVSCALIS) are cleaved as a signal peptide.

It belongs to the bacterial solute-binding protein 1 family.

It localises to the periplasm. In terms of biological role, probably part of the binding-protein-dependent transport system YcjNOP. The sequence is that of Putative ABC transporter periplasmic-binding protein YcjN (ycjN) from Escherichia coli (strain K12).